We begin with the raw amino-acid sequence, 114 residues long: UPF0102 protein HPAG1_0809 (114 aa).

The protein belongs to the UPF0102 family.

The protein is UPF0102 protein HPAG1_0809 of Helicobacter pylori (strain HPAG1).